The primary structure comprises 227 residues: Leucyl/phenylalanyl-tRNA--protein transferase (227 aa).

The protein belongs to the L/F-transferase family.

It is found in the cytoplasm. The catalysed reaction is N-terminal L-lysyl-[protein] + L-leucyl-tRNA(Leu) = N-terminal L-leucyl-L-lysyl-[protein] + tRNA(Leu) + H(+). It carries out the reaction N-terminal L-arginyl-[protein] + L-leucyl-tRNA(Leu) = N-terminal L-leucyl-L-arginyl-[protein] + tRNA(Leu) + H(+). It catalyses the reaction L-phenylalanyl-tRNA(Phe) + an N-terminal L-alpha-aminoacyl-[protein] = an N-terminal L-phenylalanyl-L-alpha-aminoacyl-[protein] + tRNA(Phe). Its function is as follows. Functions in the N-end rule pathway of protein degradation where it conjugates Leu, Phe and, less efficiently, Met from aminoacyl-tRNAs to the N-termini of proteins containing an N-terminal arginine or lysine. The sequence is that of Leucyl/phenylalanyl-tRNA--protein transferase from Desulfotalea psychrophila (strain LSv54 / DSM 12343).